We begin with the raw amino-acid sequence, 212 residues long: Regulatory protein RecX (212 aa).

Belongs to the RecX family.

The protein localises to the cytoplasm. Functionally, modulates RecA activity. This chain is Regulatory protein RecX, found in Clostridium perfringens (strain SM101 / Type A).